The chain runs to 325 residues: Formimidoylglutamase (325 aa).

His-130, Asp-156, His-158, Asp-160, Cys-244, and Asp-246 together coordinate Mn(2+).

Belongs to the arginase family. The cofactor is Mn(2+).

It catalyses the reaction N-formimidoyl-L-glutamate + H2O = formamide + L-glutamate. Its pathway is amino-acid degradation; L-histidine degradation into L-glutamate; L-glutamate from N-formimidoyl-L-glutamate (hydrolase route): step 1/1. Its function is as follows. Catalyzes the conversion of N-formimidoyl-L-glutamate to L-glutamate and formamide. This chain is Formimidoylglutamase, found in Geobacillus sp. (strain WCH70).